The chain runs to 175 residues: Cuticle protein CP1876 (175 aa).

In terms of tissue distribution, calcified shell.

This Cancer pagurus (Rock crab) protein is Cuticle protein CP1876.